The chain runs to 430 residues: Serine hydroxymethyltransferase 2 (430 aa).

(6S)-5,6,7,8-tetrahydrofolate-binding positions include Leu-128 and 132 to 134; that span reads GHL. N6-(pyridoxal phosphate)lysine is present on Lys-237.

This sequence belongs to the SHMT family. In terms of assembly, homodimer. The cofactor is pyridoxal 5'-phosphate.

The protein localises to the cytoplasm. The enzyme catalyses (6R)-5,10-methylene-5,6,7,8-tetrahydrofolate + glycine + H2O = (6S)-5,6,7,8-tetrahydrofolate + L-serine. Its pathway is one-carbon metabolism; tetrahydrofolate interconversion. It functions in the pathway amino-acid biosynthesis; glycine biosynthesis; glycine from L-serine: step 1/1. In terms of biological role, catalyzes the reversible interconversion of serine and glycine with tetrahydrofolate (THF) serving as the one-carbon carrier. This reaction serves as the major source of one-carbon groups required for the biosynthesis of purines, thymidylate, methionine, and other important biomolecules. Also exhibits THF-independent aldolase activity toward beta-hydroxyamino acids, producing glycine and aldehydes, via a retro-aldol mechanism. In Rhodospirillum rubrum (strain ATCC 11170 / ATH 1.1.1 / DSM 467 / LMG 4362 / NCIMB 8255 / S1), this protein is Serine hydroxymethyltransferase 2.